Reading from the N-terminus, the 218-residue chain is dTTP/UTP pyrophosphatase (218 aa).

The Proton acceptor role is filled by D69.

The protein belongs to the Maf family. YhdE subfamily. A divalent metal cation is required as a cofactor.

Its subcellular location is the cytoplasm. It catalyses the reaction dTTP + H2O = dTMP + diphosphate + H(+). The enzyme catalyses UTP + H2O = UMP + diphosphate + H(+). Nucleoside triphosphate pyrophosphatase that hydrolyzes dTTP and UTP. May have a dual role in cell division arrest and in preventing the incorporation of modified nucleotides into cellular nucleic acids. The chain is dTTP/UTP pyrophosphatase from Thermomicrobium roseum (strain ATCC 27502 / DSM 5159 / P-2).